A 209-amino-acid chain; its full sequence is Claudin-like protein ZF-A9 (209 aa).

4 consecutive transmembrane segments (helical) span residues 8–28, 81–101, 114–134, and 159–179; these read LGTTLGTLGWLGIIISCAIPL, AILVISAIVGLIAMFASFAGG, ALVATTGGVAFIIAGILGLVP, and FGAAIFICWGAAVLLVIGGGL. The tract at residues 187-209 is disordered; sequence GRTSSRGRYTPASQNGRERSEYV. The segment covering 188 to 201 has biased composition (polar residues); the sequence is RTSSRGRYTPASQN.

Belongs to the claudin family.

It localises to the cell membrane. Its subcellular location is the cell junction. The protein resides in the tight junction. Component of tight junction (TJ) strands. This chain is Claudin-like protein ZF-A9 (cldng), found in Danio rerio (Zebrafish).